Consider the following 360-residue polypeptide: NAD(P)H-quinone oxidoreductase subunit 1, chloroplastic (360 aa).

The next 9 helical transmembrane spans lie at 27–47, 98–118, 129–149, 165–185, 203–223, 248–268, 269–289, 297–317, and 340–360; these read IWIFVPIFSLILGIITGVLVI, FSIGPSIAVISILLSYSVIPF, IGIFLWIAISSIAPIGLLMSG, AAQSISYEIPLTLCVLSISLL, FWGWNLWRQPIGFIIFLISSL, YSGIKFGLFYVASYLNLLISS, LFVTVLYLGGWNISIPYISIL, IFGTTIGIFITLAKTYLFLFI, and FLLPISLGNLLLTTSFQLFSL.

The protein belongs to the complex I subunit 1 family. As to quaternary structure, NDH is composed of at least 16 different subunits, 5 of which are encoded in the nucleus.

The protein localises to the plastid. Its subcellular location is the chloroplast thylakoid membrane. The catalysed reaction is a plastoquinone + NADH + (n+1) H(+)(in) = a plastoquinol + NAD(+) + n H(+)(out). The enzyme catalyses a plastoquinone + NADPH + (n+1) H(+)(in) = a plastoquinol + NADP(+) + n H(+)(out). Its function is as follows. NDH shuttles electrons from NAD(P)H:plastoquinone, via FMN and iron-sulfur (Fe-S) centers, to quinones in the photosynthetic chain and possibly in a chloroplast respiratory chain. The immediate electron acceptor for the enzyme in this species is believed to be plastoquinone. Couples the redox reaction to proton translocation, and thus conserves the redox energy in a proton gradient. This is NAD(P)H-quinone oxidoreductase subunit 1, chloroplastic from Barbarea verna (Land cress).